The primary structure comprises 419 residues: Histone acetyltransferase type B catalytic subunit (419 aa).

Alanine 2 is modified (N-acetylalanine). Lysine 9 and lysine 15 each carry N6-acetyllysine. An interaction with histone H4 N-terminus region spans residues 62 to 64; that stretch reads DDE. At serine 190 the chain carries Phosphoserine. The segment at 225–227 is interaction with histone H4 N-terminus; sequence YNY. Acetyl-CoA contacts are provided by residues 241-243 and 248-254; these read MLI and QGQGHGA. The Proton donor/acceptor role is filled by glutamate 276. Residue serine 343 is modified to Phosphoserine.

The protein belongs to the HAT1 family. Catalytic subunit of the type B histone acetyltransferase (HAT) complex, composed of RBBP7 and HAT1. Interacts with histones H4 and H2A. The interaction is dependent of the ability of RBBP7 to bind to the N-terminus of histones. Component of the histone H3.1 and H3.3 complexes. Phosphorylated by AMPK at Ser-190; phosphorylation increases HAT1 activity.

Its subcellular location is the nucleus matrix. It is found in the mitochondrion. The enzyme catalyses L-lysyl-[protein] + acetyl-CoA = N(6)-acetyl-L-lysyl-[protein] + CoA + H(+). Histone acetyltransferase that plays a role in different biological processes including cell cycle progression, glucose metabolism, histone production or DNA damage repair. Coordinates histone production and acetylation via H4 promoter binding. Acetylates histone H4 at 'Lys-5' (H4K5ac) and 'Lys-12' (H4K12ac) and, to a lesser extent, histone H2A at 'Lys-5' (H2AK5ac). Drives H4 production by chromatin binding to support chromatin replication and acetylation. Since transcription of H4 genes is tightly coupled to S-phase, plays an important role in S-phase entry and progression. Promotes homologous recombination in DNA repair by facilitating histone turnover and incorporation of acetylated H3.3 at sites of double-strand breaks. In addition, acetylates other substrates such as chromatin-related proteins. Also acetylates RSAD2 which mediates the interaction of ubiquitin ligase UBE4A with RSAD2 leading to RSAD2 ubiquitination and subsequent degradation. The sequence is that of Histone acetyltransferase type B catalytic subunit (Hat1) from Rattus norvegicus (Rat).